The primary structure comprises 166 residues: Large ribosomal subunit protein uL10 (166 aa).

It belongs to the universal ribosomal protein uL10 family. As to quaternary structure, part of the ribosomal stalk of the 50S ribosomal subunit. The N-terminus interacts with L11 and the large rRNA to form the base of the stalk. The C-terminus forms an elongated spine to which L12 dimers bind in a sequential fashion forming a multimeric L10(L12)X complex.

Its function is as follows. Forms part of the ribosomal stalk, playing a central role in the interaction of the ribosome with GTP-bound translation factors. This Pseudomonas entomophila (strain L48) protein is Large ribosomal subunit protein uL10.